The sequence spans 248 residues: Probable phosphatase VPA0505 (248 aa).

Zn(2+) contacts are provided by histidine 8, histidine 10, histidine 16, histidine 41, glutamate 74, histidine 102, histidine 132, aspartate 194, and histidine 196.

Belongs to the PHP family. Zn(2+) is required as a cofactor.

The polypeptide is Probable phosphatase VPA0505 (Vibrio parahaemolyticus serotype O3:K6 (strain RIMD 2210633)).